A 68-amino-acid polypeptide reads, in one-letter code: Metallothionein-3 (68 aa).

Met-1 bears the N-acetylmethionine mark. The segment at Met-1–Cys-30 is beta. Positions 6, 8, 14, 16, 20, 22, 25, 27, and 30 each coordinate a divalent metal cation. Residues Lys-31–Glu-68 are alpha. Ser-33 carries the post-translational modification Phosphoserine. Positions 34, 35, 37, 38, 42, 45, 49, 51, 64, 66, and 67 each coordinate a divalent metal cation.

This sequence belongs to the metallothionein superfamily. Type 1 family.

Its function is as follows. Binds heavy metals. Contains five zinc and one copper atoms per polypeptide chain and only a negligible amount of cadmium. This chain is Metallothionein-3 (MT3), found in Macaca fascicularis (Crab-eating macaque).